The chain runs to 244 residues: Protein DCG1 (244 aa).

The protein belongs to the HyuE racemase family.

This is Protein DCG1 (DCG1) from Saccharomyces cerevisiae (strain ATCC 204508 / S288c) (Baker's yeast).